The primary structure comprises 206 residues: Homoserine/homoserine lactone efflux protein (206 aa).

The next 6 membrane-spanning stretches (helical) occupy residues 5–25 (WWFA…SGAI), 45–65 (GLQT…GTLF), 68–88 (SLIA…WLGI), 117–137 (FVNL…PQFI), 148–168 (LILG…YATL), and 182–202 (MKAL…LLAS).

It belongs to the Rht family.

It is found in the cell membrane. Functionally, conducts the efflux of homoserine and homoserine lactone. This is Homoserine/homoserine lactone efflux protein (rhtB) from Salmonella typhi.